The following is a 462-amino-acid chain: Cysteine--tRNA ligase (462 aa).

Cysteine 28 is a binding site for Zn(2+). A 'HIGH' region motif is present at residues 30-40 (MTVYDYCHIGH). Positions 209, 234, and 238 each coordinate Zn(2+). A 'KMSKS' region motif is present at residues 266–270 (KMSKS). Lysine 269 is an ATP binding site.

The protein belongs to the class-I aminoacyl-tRNA synthetase family. In terms of assembly, monomer. The cofactor is Zn(2+).

Its subcellular location is the cytoplasm. The catalysed reaction is tRNA(Cys) + L-cysteine + ATP = L-cysteinyl-tRNA(Cys) + AMP + diphosphate. The chain is Cysteine--tRNA ligase from Pseudomonas fluorescens (strain SBW25).